Reading from the N-terminus, the 219-residue chain is Small ribosomal subunit protein uS3 (219 aa).

Residues isoleucine 38 to lysine 106 form the KH type-2 domain.

The protein belongs to the universal ribosomal protein uS3 family. In terms of assembly, part of the 30S ribosomal subunit. Forms a tight complex with proteins S10 and S14.

Functionally, binds the lower part of the 30S subunit head. Binds mRNA in the 70S ribosome, positioning it for translation. This Latilactobacillus sakei subsp. sakei (strain 23K) (Lactobacillus sakei subsp. sakei) protein is Small ribosomal subunit protein uS3.